The primary structure comprises 767 residues: MVQSAVLGFPRIGPNRELKKATEGYWNGKITVDELFKVGKDLRTQNWKLQKEAGVDIIPSNDFSFYDQVLDLSLLFNVIPDRYTKYDLSPIDTLFAMGRGLQRKATETEKAVDVTALEMVKWFDSNYHYVRPTFSKTTQFKLNGQKPVDEFLEAKELGIHTRPVLLGPVSYLFLGKADKDSLDLEPLSLLEQLLPLYTEILSKLASAGATEVQIDEPVLVLDLPANAQAAIKKAYTYFGEQSNLPKITLATYFGTVVPNLDAIKGLPVAALHVDFVRAPEQFDEVVAAIGNKQTLSVGIVDGRNIWKNDFKKSSAIVNKAIEKLGADRVVVATSSSLLHTPVDLNNETKLDAEIKGFFSFATQKLDEVVVITKNVSGQDVAAALEANAKSVESRGKSKFIHDAAVKARVASIDEKMSTRAAPFEQRLPEQQKVFNLPLFPTTTIGSFPQTKDIRINRNKFNKGTISAEEYEKFINSEIEKVIRFQEEIGLDVLVHGEPERNDMVQYFGEQINGYAFTVNGWVQSYGSRYVRPPIIVGDLSRPKAMSVKESVYAQSITSKPVKGMLTGPITCLRWSFPRDDVDQKTQAMQLALALRDEVNDLEAAGIKVIQVDEPALREGLPLREGTERSAYYTWAAEAFRVATSGVANKTQIHSHFCYSDLDPNHIKALDADVVSIEFSKKDDANYIAEFKNYPNHIGLGLFDIHSPRIPSKDEFIAKISTILKSYPAEKFWVNPDCGLKTRGWEETRLSLTHMVEAAKYFREQYKN.

Lys-19 serves as a coordination point for 5-methyltetrahydropteroyltri-L-glutamate. A Phosphoserine modification is found at Ser-89. Residue Asn-126 participates in 5-methyltetrahydropteroyltri-L-glutamate binding. A Phosphoserine modification is found at Ser-242. Residues 444 to 446 and Glu-497 contribute to the L-homocysteine site; that span reads IGS. L-methionine contacts are provided by residues 444 to 446 and Glu-497; that span reads IGS. Residues Asp-502, Tyr-525, and 528-529 each bind 5-methyltetrahydropteroyltri-L-glutamate; that span reads RY. Position 566 is a phosphothreonine (Thr-566). Residue Trp-574 participates in 5-methyltetrahydropteroyltri-L-glutamate binding. Asp-612 serves as a coordination point for L-homocysteine. L-methionine is bound at residue Asp-612. Residue Ser-629 is modified to Phosphoserine. Residues His-655, Cys-657, and Glu-677 each contribute to the Zn(2+) site. His-705 serves as the catalytic Proton donor. Ser-706 carries the post-translational modification Phosphoserine. Cys-737 serves as a coordination point for Zn(2+).

Belongs to the vitamin-B12 independent methionine synthase family. Zn(2+) is required as a cofactor.

The catalysed reaction is 5-methyltetrahydropteroyltri-L-glutamate + L-homocysteine = tetrahydropteroyltri-L-glutamate + L-methionine. It participates in amino-acid biosynthesis; L-methionine biosynthesis via de novo pathway; L-methionine from L-homocysteine (MetE route): step 1/1. Its function is as follows. Catalyzes the transfer of a methyl group from 5-methyltetrahydrofolate to homocysteine resulting in methionine formation. The sequence is that of 5-methyltetrahydropteroyltriglutamate--homocysteine methyltransferase (MET6) from Saccharomyces cerevisiae (strain ATCC 204508 / S288c) (Baker's yeast).